A 318-amino-acid polypeptide reads, in one-letter code: MKQNIYSPLVSIIIPVYNGANYMREAIDSALAQTYKNIEIIVVNDGSKDETETIALSYGDKICYLYKENGGCGSALNCGIKNMKGKYFSWLSHDDVYYPNKIEHQINILNKLDNKDVIVYCGYELIDQKSHSLYCVKPDQRYSKEKLDISLFPLLHSLIHGCTLLIPSILFQKIGLFDESLKYTHDYDLWFKFFRVSSIYFDHEVLIKSRIHAAQTTNTALNQLEEYEDLWSGFLKKLTKEEMIMIKGSTHQFLSDIAVFLKKNGYIKSYQLALAMTDQKIIGGFYTSIITEIIYSLRRHGINTTITKIYKWIRKSRK.

Belongs to the glycosyltransferase 2 family.

This is an uncharacterized protein from Rickettsia prowazekii (strain Madrid E).